The primary structure comprises 473 residues: MHSLFLKILIYSLMQCVLGQAEFWDYDENVTQIEEDFKIDDVTRILKRVGNYNRNAYPLLDQDLATHVDIQMYIEGMSSFHAQSMDFQVDIYFQEKWVDHRLQHNNTKRILVKDPKLFGLLWHPDLYFANARTASFHDVTQPNFLVWIYPNGTVWYDCRISLTVLCMQDLARYPLDSQNCGLRILSYAYDEEQLIIRWNGGNPVEVNRGIRMPDMHLKHIKFYTKRDKYATGIWSSAVAEFHVDREITHHIIQSYIPTSLIVIISWFSFWLDVEAVPGRVSLSITTLLTLATQSSAARMALPQASDVKAIDVWMGTCMAFVFSAMIEFTVVNYCVRRKVRTKIKPRGLSEQVHDMVAQYREKKDKFNNGNCEISYEMALQPNEDNATVQRNFEKKEVREMNQASLFVRRSLLPTSKRKTIEDRINRVEENRKNAQKIDRYSRALFPLAFIIFNIFYWIYYLKYAGSNSPELLL.

The N-terminal stretch at 1–19 is a signal peptide; it reads MHSLFLKILIYSLMQCVLG. Residues 20–249 lie on the Extracellular side of the membrane; it reads QAEFWDYDEN…EFHVDREITH (230 aa). 3 N-linked (GlcNAc...) asparagine glycosylation sites follow: Asn29, Asn105, and Asn151. An intrachain disulfide couples Cys166 to Cys180. A helical membrane pass occupies residues 250–271; it reads HIIQSYIPTSLIVIISWFSFWL. Over 272–276 the chain is Cytoplasmic; that stretch reads DVEAV. The helical transmembrane segment at 277-297 threads the bilayer; that stretch reads PGRVSLSITTLLTLATQSSAA. Residues 298–308 are Extracellular-facing; it reads RMALPQASDVK. A helical transmembrane segment spans residues 309–329; it reads AIDVWMGTCMAFVFSAMIEFT. The Cytoplasmic segment spans residues 330–439; sequence VVNYCVRRKV…NRKNAQKIDR (110 aa). The helical transmembrane segment at 440–460 threads the bilayer; the sequence is YSRALFPLAFIIFNIFYWIYY. Topologically, residues 461–473 are extracellular; the sequence is LKYAGSNSPELLL.

This sequence belongs to the ligand-gated ion channel (TC 1.A.9) family. Glycine receptor (TC 1.A.9.3) subfamily. Pentamer.

It is found in the postsynaptic cell membrane. Its subcellular location is the synapse. It localises to the cell membrane. Glycine receptors are ligand-gated chloride channels. Channel opening is triggered by extracellular glycine. Contributes to the generation of inhibitory postsynaptic currents. This is Glycine receptor subunit beta-type 4 from Caenorhabditis elegans.